Consider the following 497-residue polypeptide: Cytochrome P450 71A14 (497 aa).

Residues 3 to 23 (MIIISLCLATILALLLLKQFL) traverse the membrane as a helical segment. Residue Cys-440 participates in heme binding.

Belongs to the cytochrome P450 family. Heme serves as cofactor.

The protein localises to the membrane. The polypeptide is Cytochrome P450 71A14 (CYP71A14) (Arabidopsis thaliana (Mouse-ear cress)).